The following is a 267-amino-acid chain: Thiamine thiazole synthase (267 aa).

NAD(+)-binding positions include Ser-41, 60–61 (ER), Gly-68, Val-132, and 160–162 (HVD). Fe cation-binding residues include Asp-162 and His-177. Residue Met-227 coordinates NAD(+). Glycine is bound at residue Arg-237.

Belongs to the THI4 family. As to quaternary structure, homooctamer; tetramer of dimers. The cofactor is Fe(2+).

The catalysed reaction is hydrogen sulfide + glycine + NAD(+) = ADP-5-ethyl-4-methylthiazole-2-carboxylate + nicotinamide + 3 H2O + H(+). It participates in cofactor biosynthesis; thiamine diphosphate biosynthesis. In terms of biological role, involved in the biosynthesis of the thiazole moiety of thiamine. Catalyzes the conversion of NAD and glycine to adenosine diphosphate 5-(2-hydroxyethyl)-4-methylthiazole-2-carboxylate (ADT), an adenylated thiazole intermediate, using free sulfide as a source of sulfur. This Saccharolobus islandicus (strain M.14.25 / Kamchatka #1) (Sulfolobus islandicus) protein is Thiamine thiazole synthase.